The primary structure comprises 84 residues: uncharacterized protein (84 aa).

In terms of biological role, this protein may be involved in virus assembly. This is an uncharacterized protein from Saccharolobus solfataricus (Sulfolobus solfataricus).